A 357-amino-acid chain; its full sequence is Fructose-1,6-bisphosphatase class 1 3 (357 aa).

Mg(2+)-binding residues include E94, D116, L118, and D119. Substrate-binding positions include 119–122 (DGSS) and N211. E283 lines the Mg(2+) pocket.

This sequence belongs to the FBPase class 1 family. As to quaternary structure, homotetramer. Mg(2+) is required as a cofactor.

The protein localises to the cytoplasm. It carries out the reaction beta-D-fructose 1,6-bisphosphate + H2O = beta-D-fructose 6-phosphate + phosphate. The protein operates within carbohydrate biosynthesis; Calvin cycle. This is Fructose-1,6-bisphosphatase class 1 3 from Methylibium petroleiphilum (strain ATCC BAA-1232 / LMG 22953 / PM1).